The primary structure comprises 559 residues: Chaperonin GroEL 1 (559 aa).

ATP contacts are provided by residues threonine 29 to proline 32, aspartate 86 to threonine 90, glycine 413, asparagine 476 to leucine 478, and aspartate 492. The interval lysine 521–glycine 541 is disordered.

It belongs to the chaperonin (HSP60) family. Forms a cylinder of 14 subunits composed of two heptameric rings stacked back-to-back. Interacts with the co-chaperonin GroES.

It is found in the cytoplasm. The enzyme catalyses ATP + H2O + a folded polypeptide = ADP + phosphate + an unfolded polypeptide.. In terms of biological role, together with its co-chaperonin GroES, plays an essential role in assisting protein folding. The GroEL-GroES system forms a nano-cage that allows encapsulation of the non-native substrate proteins and provides a physical environment optimized to promote and accelerate protein folding. The sequence is that of Chaperonin GroEL 1 from Synechococcus sp. (strain CC9605).